A 180-amino-acid polypeptide reads, in one-letter code: Pyruvate synthase subunit PorC (180 aa).

In terms of assembly, heterotetramer of one alpha, one beta, one delta and one gamma chain.

The enzyme catalyses 2 oxidized [2Fe-2S]-[ferredoxin] + pyruvate + CoA = 2 reduced [2Fe-2S]-[ferredoxin] + acetyl-CoA + CO2 + H(+). The polypeptide is Pyruvate synthase subunit PorC (porC) (Methanothermobacter thermautotrophicus (strain ATCC 29096 / DSM 1053 / JCM 10044 / NBRC 100330 / Delta H) (Methanobacterium thermoautotrophicum)).